The sequence spans 76 residues: MYLPLLLFCVISCYGEQINNLDDLQAKLDSMPPSDFIDHNGHNICQDCDRLCPLISDNPTCEEDCYGRCNKGITRQ.

Positions 1–15 are cleaved as a signal peptide; that stretch reads MYLPLLLFCVISCYG.

This is an uncharacterized protein from Magallana gigas (Pacific oyster).